A 160-amino-acid polypeptide reads, in one-letter code: Non-secretory ribonuclease (160 aa).

The signal sequence occupies residues 1-27 (MVPKLFTSPICLLLLLGLMGVEGSLHA). C-linked (Man) tryptophan glycosylation is present at Trp34. The active-site Proton acceptor is His42. Asn44 is a glycosylation site (N-linked (GlcNAc...) asparagine). 4 disulfide bridges follow: Cys50/Cys110, Cys64/Cys122, Cys82/Cys137, and Cys89/Cys98. The residue at position 60 (Tyr60) is a 3'-nitrotyrosine. 65-69 (KNQNT) is a binding site for substrate. N-linked (GlcNAc...) asparagine glycans are attached at residues Asn92, Asn111, and Asn138. His155 functions as the Proton donor in the catalytic mechanism.

Belongs to the pancreatic ribonuclease family. Interacts with and forms a tight 1:1 complex with RNH1. Dimerization of two such complexes may occur.

It is found in the lysosome. Its subcellular location is the cytoplasmic granule. It carries out the reaction an [RNA] containing cytidine + H2O = an [RNA]-3'-cytidine-3'-phosphate + a 5'-hydroxy-ribonucleotide-3'-[RNA].. The catalysed reaction is an [RNA] containing uridine + H2O = an [RNA]-3'-uridine-3'-phosphate + a 5'-hydroxy-ribonucleotide-3'-[RNA].. Functionally, this is a non-secretory ribonuclease. It is a pyrimidine specific nuclease with a slight preference for U. Cytotoxin and helminthotoxin. Possesses a wide variety of biological activities. The protein is Non-secretory ribonuclease (RNASE2) of Macaca nemestrina (Pig-tailed macaque).